We begin with the raw amino-acid sequence, 422 residues long: MLYYLFQYLEKFDFPGAGMFGYVSFRSLMAIILSLLISAIFGEYFINLLKRKQITETQRDASIDPFNVKKVGVPTMGGIIIIVAILIPCLLLGKLHNIYMILMLITTIWLGTLGFLDDYIKVFRKDKEGLHGKFKIIGQVGLGLIVGLTLYLSPSVVIRENVEIQRGGEIVEVVHKEQDQKSTKTTIPFFKNNNLDYADFVGFLGNNAQAVGWIIFVLVTIFVVTAVSNGANLNDGMDGMAAGNSAIIGLTLGILAYVSSHIEYAGYLNIMYIPGSEELVIFICSFIGALIGFLWYNAFPAQVFMGDTGSLTIGGIIAVFAIIIHKELLIPILCGIFLVENLSVILQVRYFKSGKKKGHLQRVFKRAPIHDHFRTTLAQLDPNCSYLFMKPNSVFHESKITVRFWIVTIVLAAITIITLKIR.

A run of 9 helical transmembrane segments spans residues 28 to 48, 71 to 91, 95 to 115, 136 to 156, 208 to 228, 239 to 259, 279 to 299, 313 to 333, and 399 to 419; these read LMAI…FINL, VGVP…PCLL, LHNI…TLGF, IIGQ…SPSV, AQAV…TAVS, GMAA…AYVS, LVIF…YNAF, IGGI…IPIL, and KITV…IITL.

The protein belongs to the glycosyltransferase 4 family. MraY subfamily. Requires Mg(2+) as cofactor.

Its subcellular location is the cell inner membrane. The enzyme catalyses UDP-N-acetyl-alpha-D-muramoyl-L-alanyl-gamma-D-glutamyl-meso-2,6-diaminopimeloyl-D-alanyl-D-alanine + di-trans,octa-cis-undecaprenyl phosphate = di-trans,octa-cis-undecaprenyl diphospho-N-acetyl-alpha-D-muramoyl-L-alanyl-D-glutamyl-meso-2,6-diaminopimeloyl-D-alanyl-D-alanine + UMP. It participates in cell wall biogenesis; peptidoglycan biosynthesis. In terms of biological role, catalyzes the initial step of the lipid cycle reactions in the biosynthesis of the cell wall peptidoglycan: transfers peptidoglycan precursor phospho-MurNAc-pentapeptide from UDP-MurNAc-pentapeptide onto the lipid carrier undecaprenyl phosphate, yielding undecaprenyl-pyrophosphoryl-MurNAc-pentapeptide, known as lipid I. This Phocaeicola vulgatus (strain ATCC 8482 / DSM 1447 / JCM 5826 / CCUG 4940 / NBRC 14291 / NCTC 11154) (Bacteroides vulgatus) protein is Phospho-N-acetylmuramoyl-pentapeptide-transferase.